The following is a 300-amino-acid chain: Protoheme IX farnesyltransferase (300 aa).

Helical transmembrane passes span 24–44, 46–66, 99–119, 122–142, 145–165, 176–196, 220–240, 244–264, and 275–295; these read GLAISVVFSSLAGYLLGIHEF, LETIYVLLMLAIGGYCMVGAS, AFTIATILTITGLTILYMINP, AMFGAISIFLYTCVYTPLKTV, LSVFVGAFPGAIPFMLGWVAA, LFLIQFFWQFPHFWAIGWFLF, IVLYTLWLTAASILPSFGYTG, LTPVSAIIVVLLGLWMLVYAI, and AKTLMLVSVAYISLIQVVYIL.

This sequence belongs to the UbiA prenyltransferase family. Protoheme IX farnesyltransferase subfamily.

The protein localises to the cell inner membrane. It catalyses the reaction heme b + (2E,6E)-farnesyl diphosphate + H2O = Fe(II)-heme o + diphosphate. It participates in porphyrin-containing compound metabolism; heme O biosynthesis; heme O from protoheme: step 1/1. In terms of biological role, converts heme B (protoheme IX) to heme O by substitution of the vinyl group on carbon 2 of heme B porphyrin ring with a hydroxyethyl farnesyl side group. This is Protoheme IX farnesyltransferase from Flavobacterium psychrophilum (strain ATCC 49511 / DSM 21280 / CIP 103535 / JIP02/86).